The sequence spans 269 residues: Phosphatidylglycerophosphate phosphatase 1, chloroplastic (269 aa).

The transit peptide at Met1–Arg33 directs the protein to the chloroplast. Residues Gly25 to Ala46 form a disordered region. A compositionally biased stretch (low complexity) spans Ser29 to Ala46. A Phosphoryl acceptor motif is present at residues Asp103–Thr107.

The protein belongs to the HAD-like hydrolase superfamily.

The protein resides in the plastid. The protein localises to the chloroplast. The enzyme catalyses a 1,2-diacyl-sn-glycero-3-phospho-(1'-sn-glycero-3'-phosphate) + H2O = a 1,2-diacyl-sn-glycero-3-phospho-(1'-sn-glycerol) + phosphate. It functions in the pathway phospholipid metabolism; phosphatidylglycerol biosynthesis; phosphatidylglycerol from CDP-diacylglycerol: step 2/2. In terms of biological role, phosphatidylglycerophosphate phosphatase involved in the biosynthesis of phosphatidylglycerol (PG), a phosphoglycerolipid predominantly present in chloroplastic thylakoid membranes and which has important photosynthetic function. Required for thylakoid membranes development and chloroplast function. The polypeptide is Phosphatidylglycerophosphate phosphatase 1, chloroplastic (Chlamydomonas reinhardtii (Chlamydomonas smithii)).